The sequence spans 180 residues: Large ribosomal subunit protein uL5 (180 aa).

It belongs to the universal ribosomal protein uL5 family. In terms of assembly, part of the 50S ribosomal subunit; part of the 5S rRNA/L5/L18/L25 subcomplex. Contacts the 5S rRNA and the P site tRNA. Forms a bridge to the 30S subunit in the 70S ribosome.

In terms of biological role, this is one of the proteins that bind and probably mediate the attachment of the 5S RNA into the large ribosomal subunit, where it forms part of the central protuberance. In the 70S ribosome it contacts protein S13 of the 30S subunit (bridge B1b), connecting the 2 subunits; this bridge is implicated in subunit movement. Contacts the P site tRNA; the 5S rRNA and some of its associated proteins might help stabilize positioning of ribosome-bound tRNAs. In Lactobacillus johnsonii (strain CNCM I-12250 / La1 / NCC 533), this protein is Large ribosomal subunit protein uL5.